Consider the following 499-residue polypeptide: Serine/threonine-protein kinase SSN3 (499 aa).

Positions Met-1–Ala-21 are disordered. The region spanning Tyr-61–Phe-442 is the Protein kinase domain. ATP contacts are provided by residues Ile-67–Val-75 and Lys-91. Asp-193 serves as the catalytic Proton acceptor. Disordered regions lie at residues Ser-332 to Ala-376 and Arg-463 to Glu-499. Positions Ser-365 to Ala-376 are enriched in low complexity. Over residues Arg-463–Ile-472 the composition is skewed to basic and acidic residues.

This sequence belongs to the protein kinase superfamily. CMGC Ser/Thr protein kinase family. CDC2/CDKX subfamily. Component of the SRB8-11 complex, a regulatory module of the Mediator complex. It depends on Mg(2+) as a cofactor.

The protein resides in the nucleus. The catalysed reaction is L-seryl-[protein] + ATP = O-phospho-L-seryl-[protein] + ADP + H(+). It carries out the reaction L-threonyl-[protein] + ATP = O-phospho-L-threonyl-[protein] + ADP + H(+). The enzyme catalyses [DNA-directed RNA polymerase] + ATP = phospho-[DNA-directed RNA polymerase] + ADP + H(+). In terms of biological role, component of the SRB8-11 complex. The SRB8-11 complex is a regulatory module of the Mediator complex which is itself involved in regulation of basal and activated RNA polymerase II-dependent transcription. The SRB8-11 complex may be involved in the transcriptional repression of a subset of genes regulated by Mediator. It may inhibit the association of the Mediator complex with RNA polymerase II to form the holoenzyme complex. The SRB8-11 complex phosphorylates the C-terminal domain (CTD) of the largest subunit of RNA polymerase II. The sequence is that of Serine/threonine-protein kinase SSN3 (SSN3) from Pyricularia oryzae (strain 70-15 / ATCC MYA-4617 / FGSC 8958) (Rice blast fungus).